A 211-amino-acid chain; its full sequence is Ribosomal RNA small subunit methyltransferase G (211 aa).

S-adenosyl-L-methionine-binding positions include Gly73, Phe78, 124 to 125, and Arg137; that span reads VE.

It belongs to the methyltransferase superfamily. RNA methyltransferase RsmG family.

It localises to the cytoplasm. Its function is as follows. Specifically methylates the N7 position of a guanine in 16S rRNA. The protein is Ribosomal RNA small subunit methyltransferase G of Christiangramia forsetii (strain DSM 17595 / CGMCC 1.15422 / KT0803) (Gramella forsetii).